Here is a 500-residue protein sequence, read N- to C-terminus: Intermediate filament protein ifc-1 (500 aa).

Residues 1 to 36 form a head region; the sequence is MSLYGGIPTNLVSGMSSAGAICTTQIRDAREREKRE. Positions 33 to 383 constitute an IF rod domain; the sequence is EKREIGLLND…VLLNGANVTT (351 aa). The interval 37 to 68 is coil 1A; it reads IGLLNDRLADYIEKVRFLKAQNHVLSHDIEIL. The interval 69–81 is linker 1; the sequence is RRGFSGGGHISSF. The interval 82–219 is coil 1B; it reads FESEISNCTV…TENSSRIEQE (138 aa). The linker 12 stretch occupies residues 220 to 237; that stretch reads LIYIHRDTTLENRDYFRQ. Positions 238–383 are coil 2; the sequence is ELQAAMRDIR…VLLNGANVTT (146 aa). Residues 384–496 are tail; sequence YVSNSTGAAG…RHHESSYSYS (113 aa).

It belongs to the intermediate filament family.

Its subcellular location is the cytoplasm. Its function is as follows. Cytoplasmic intermediate filaments provide mechanical strength to cells. Not essential protein. This chain is Intermediate filament protein ifc-1 (ifc-1), found in Caenorhabditis elegans.